Reading from the N-terminus, the 383-residue chain is MVIDPVTLSQELISFPSITPTDNGAISFLSDILSQYGFTCHILDFGDDTVTVRNLYAYRGTEEGPNLCFAGHTDVVKTGDLTKWKFDPFSGHIEDDILYGRGAVDMKSAICAFIAAVSRINFNEVPGSISFLISGDEEGDHFQYGTPSVLKWLNENNHKIDYCIIGEPTSKSFLGDTIKVGRRGSVHFKIICNGIQGHVAYPHFAENPIDNMVSILYKICNTTFDTGNEYFQPSNCEIVSVDTGNTSKNVIPDTIVAHINIRYNNIHTAESLFDIINNICAQVTPKYQLLQSVSGEPFFNQPNQYSDMLSSAIKKVTGQDAIASTSGGVSDSRFIKNVCPVIEFGLKNETAHKIDEHVPVKEIYQLADIYTEFIKQFFNLSTT.

Histidine 72 is a Zn(2+) binding site. The active site involves aspartate 74. Residue aspartate 105 coordinates Zn(2+). Glutamate 137 functions as the Proton acceptor in the catalytic mechanism. Positions 138, 167, and 352 each coordinate Zn(2+).

This sequence belongs to the peptidase M20A family. DapE subfamily. In terms of assembly, homodimer. The cofactor is Zn(2+). Co(2+) serves as cofactor.

The catalysed reaction is N-succinyl-(2S,6S)-2,6-diaminopimelate + H2O = (2S,6S)-2,6-diaminopimelate + succinate. Its pathway is amino-acid biosynthesis; L-lysine biosynthesis via DAP pathway; LL-2,6-diaminopimelate from (S)-tetrahydrodipicolinate (succinylase route): step 3/3. In terms of biological role, catalyzes the hydrolysis of N-succinyl-L,L-diaminopimelic acid (SDAP), forming succinate and LL-2,6-diaminopimelate (DAP), an intermediate involved in the bacterial biosynthesis of lysine and meso-diaminopimelic acid, an essential component of bacterial cell walls. The protein is Succinyl-diaminopimelate desuccinylase of Ehrlichia ruminantium (strain Welgevonden).